Here is a 394-residue protein sequence, read N- to C-terminus: MKRAILIVLDGVGIGELPDAFKYNDEGSNTLVNTAKVVGGLNLPNMGKMGLSNIEEIPGIPKEEDPIALYGKMAEASPGKDSTTGHWEIAGLILEKPFPVYPNGFPKEIIEAFEKAIGRKVIGNKPASGTEIIKELGEYHMKTGYPIVYTSADSVFQIAAHEDVIPVEELYRMCEIARAMLQGDHAVARVIARPFAGSPGNFYRTPRRRDFSLPPFKPTLLDYLKQNDYDVIGVGKIEDLFAGKGLTSSFHQENNTEGINNIFKAWEKLREGLIFVNLVDFDMLYGHRNDPQGMTRALKEFDDALPDVMGLLSDFDLLIITADHGNDPTTPSTDHSREYVPLLVYSPNFKRTFSLGIRKTFSDLGKTLAEFFEVENDLCGESFLNEIEKGWKGS.

Mn(2+)-binding residues include D10, D282, H287, D323, H324, and H335.

Belongs to the phosphopentomutase family. Mn(2+) serves as cofactor.

It is found in the cytoplasm. The catalysed reaction is 2-deoxy-alpha-D-ribose 1-phosphate = 2-deoxy-D-ribose 5-phosphate. It carries out the reaction alpha-D-ribose 1-phosphate = D-ribose 5-phosphate. It participates in carbohydrate degradation; 2-deoxy-D-ribose 1-phosphate degradation; D-glyceraldehyde 3-phosphate and acetaldehyde from 2-deoxy-alpha-D-ribose 1-phosphate: step 1/2. Isomerase that catalyzes the conversion of deoxy-ribose 1-phosphate (dRib-1-P) and ribose 1-phosphate (Rib-1-P) to deoxy-ribose 5-phosphate (dRib-5-P) and ribose 5-phosphate (Rib-5-P), respectively. This is Phosphopentomutase from Dictyoglomus turgidum (strain DSM 6724 / Z-1310).